We begin with the raw amino-acid sequence, 87 residues long: Small ribosomal subunit protein bS20 (87 aa).

A disordered region spans residues 1–26 (MANHKSAIKRHKQSQKRAARNRAAKT).

The protein belongs to the bacterial ribosomal protein bS20 family.

Its function is as follows. Binds directly to 16S ribosomal RNA. The protein is Small ribosomal subunit protein bS20 of Nitratidesulfovibrio vulgaris (strain DSM 19637 / Miyazaki F) (Desulfovibrio vulgaris).